The primary structure comprises 86 residues: Mitochondrial import inner membrane translocase subunit Tim10 (86 aa).

Positions 29-54 (CQAKCIATAFKESELTKGEAVCLDRC) match the Twin CX3C motif motif. Intrachain disulfides connect C29–C54 and C33–C50.

This sequence belongs to the small Tim family. Heterohexamer; composed of 3 copies of tim-9/tin-9.1 and 3 copies of tim-10/tin-10, named soluble 70 kDa complex. The complex associates with the tim-22 component of the TIM22 complex. Interacts with multi-pass transmembrane proteins in transit.

The protein resides in the mitochondrion inner membrane. Its function is as follows. Mitochondrial intermembrane chaperone that participates in the import and insertion of multi-pass transmembrane proteins into the mitochondrial inner membrane. May also be required for the transfer of beta-barrel precursors from the TOM complex to the sorting and assembly machinery (SAM complex) of the outer membrane. Acts as a chaperone-like protein that protects the hydrophobic precursors from aggregation and guide them through the mitochondrial intermembrane space. In Caenorhabditis briggsae, this protein is Mitochondrial import inner membrane translocase subunit Tim10 (tin-10).